Reading from the N-terminus, the 306-residue chain is BRCA2 and CDKN1A-interacting protein (306 aa).

Residues 1–10 (MASRPKRRAV) show a composition bias toward basic residues. A disordered region spans residues 1 to 45 (MASRPKRRAVSRVPPALGDEEEEDEVEEQDEDDSDEEEDEEDEVV). The span at 18–45 (GDEEEEDEVEEQDEDDSDEEEDEEDEVV) shows a compositional bias: acidic residues. Ser-34 and Ser-104 each carry phosphoserine. An interaction with BRCA2 region spans residues 51–159 (IEFEAYSISD…EKSMVEQLDR (109 aa)). The interaction with CDKN1A stretch occupies residues 153 to 251 (MVEQLDRLFN…NAEEEFFYEK (99 aa)). Residue Ser-273 is modified to Phosphoserine.

The protein belongs to the BCP1 family. As to quaternary structure, interacts with BRCA2, CDKN1A and MTDH/LYRIC. Interacts with DCTN1/p150-glued and ACTR1A/ARP1. Interacts with alpha-, beta- and gamma-tubulins. Interacts with TENT5C; the interaction has no effect on TENT5C poly(A) polymerase function.

It is found in the nucleus. The protein resides in the cytoplasm. Its subcellular location is the cytoskeleton. The protein localises to the microtubule organizing center. It localises to the centrosome. It is found in the centriole. The protein resides in the spindle pole. During interphase, required for microtubule organizing and anchoring activities. During mitosis, required for the organization and stabilization of the spindle pole. May promote cell cycle arrest by enhancing the inhibition of CDK2 activity by CDKN1A. May be required for repair of DNA damage by homologous recombination in conjunction with BRCA2. May not be involved in non-homologous end joining (NHEJ). The chain is BRCA2 and CDKN1A-interacting protein (BCCIP) from Bos taurus (Bovine).